A 404-amino-acid chain; its full sequence is UPF0674 endoplasmic reticulum membrane protein YNR021W (404 aa).

The residue at position 2 (S2) is an N-acetylserine. Residue N44 is glycosylated (N-linked (GlcNAc...) asparagine). The chain crosses the membrane as a helical span at residues 49–68; that stretch reads LCALGVLFLVYAFYKFGNSV. Residue N98 is glycosylated (N-linked (GlcNAc...) asparagine). A disordered region spans residues 369 to 404; it reads AKRRQLKASGQQEKVDQKMKEKRERRLKNKQRTRFQ. Over residues 381 to 392 the composition is skewed to basic and acidic residues; that stretch reads EKVDQKMKEKRE. Basic residues predominate over residues 393 to 404; sequence RRLKNKQRTRFQ.

Belongs to the UPF0674 family.

The protein localises to the endoplasmic reticulum membrane. The sequence is that of UPF0674 endoplasmic reticulum membrane protein YNR021W from Saccharomyces cerevisiae (strain ATCC 204508 / S288c) (Baker's yeast).